The chain runs to 115 residues: NADH-ubiquinone oxidoreductase chain 3 (115 aa).

3 helical membrane-spanning segments follow: residues 4–24 (LMALLVNITLSTLLIIVAFWL), 55–75 (FFLVAITFLLFDLEIALLLPL), and 84–104 (INIMMLTAFILVSVLALGLAY).

The protein belongs to the complex I subunit 3 family. Core subunit of respiratory chain NADH dehydrogenase (Complex I) which is composed of 45 different subunits. Interacts with TMEM186. Interacts with TMEM242.

It is found in the mitochondrion inner membrane. It carries out the reaction a ubiquinone + NADH + 5 H(+)(in) = a ubiquinol + NAD(+) + 4 H(+)(out). Core subunit of the mitochondrial membrane respiratory chain NADH dehydrogenase (Complex I) which catalyzes electron transfer from NADH through the respiratory chain, using ubiquinone as an electron acceptor. Essential for the catalytic activity of complex I. This chain is NADH-ubiquinone oxidoreductase chain 3, found in Peromyscus melanotis (Black-eared mouse).